The chain runs to 31 residues: Nemertide alpha-2 (31 aa).

Intrachain disulfides connect cysteine 2–cysteine 16, cysteine 9–cysteine 20, and cysteine 15–cysteine 26. A 4-hydroxyproline mark is found at proline 28 and proline 29.

This sequence belongs to the nemertide family. Confined to the epidermis and to the mucus layer.

The protein localises to the secreted. In terms of biological role, toxin with similar potency against both insect and mammalian sodium channels (Nav). Delays the inactivation of most Nav channels tested (B.germanica (BgNav1); EC(50)=87.2 nM, human Nav1.1/SCN1A; EC(50)=125.8 nM, rat Nav1.2/SCN2A; EC(50)=97.9 nM, rat Nav1.3/SCN3A; EC(50)=127.7 nM, rat Nav1.4/SCN4A; EC(50)=1150.3 nM, human Nav1.5/SCN5A; EC(50)=149.2 nM, mouse Nav1.6/SCN8A; EC(50)=1361.8 nM, human Nav1.9/SCN9A; EC(50)=1296.7 nM). Inactivation is completely prevented by a concentration of 1 uM, resulting in sustained, non-inactivating current. In addition, the toxin significantly enhances the recovery from inactivation, and the open state is not required for the toxin to interact with the channel. In vivo, injection into brine shrimp (Artemia salina) stops movement or causes death after 24 hours (EC(50)=2.9 uM). This is Nemertide alpha-2 from Lineus longissimus (Bootlace worm).